The sequence spans 179 residues: Large ribosomal subunit protein uL5 (179 aa).

The protein belongs to the universal ribosomal protein uL5 family. Part of the 50S ribosomal subunit; part of the 5S rRNA/L5/L18/L25 subcomplex. Contacts the 5S rRNA and the P site tRNA. Forms a bridge to the 30S subunit in the 70S ribosome.

Functionally, this is one of the proteins that bind and probably mediate the attachment of the 5S RNA into the large ribosomal subunit, where it forms part of the central protuberance. In the 70S ribosome it contacts protein S13 of the 30S subunit (bridge B1b), connecting the 2 subunits; this bridge is implicated in subunit movement. Contacts the P site tRNA; the 5S rRNA and some of its associated proteins might help stabilize positioning of ribosome-bound tRNAs. The polypeptide is Large ribosomal subunit protein uL5 (Desulforapulum autotrophicum (strain ATCC 43914 / DSM 3382 / VKM B-1955 / HRM2) (Desulfobacterium autotrophicum)).